The chain runs to 62 residues: UPF0291 protein CLM_2971 (62 aa).

It belongs to the UPF0291 family.

Its subcellular location is the cytoplasm. The polypeptide is UPF0291 protein CLM_2971 (Clostridium botulinum (strain Kyoto / Type A2)).